Consider the following 634-residue polypeptide: MAEEQDFAQLCKLSTQPSHSHCVNNTYRSTQHSQALLRGLLALRDSGILFDVVLVVEGRHIEAHRILLAASCDYFRGMFAGGLKEMEQEEVLIHGVSYNAMCQILHFIYTSELELSLSNVQETLVAACQLQIPEIIHFCCDFLMSWVDEENILDVYRLAELFDLNRLTQQLDTYILKNFVAFSRTDKYRQLPLEKVYSLLSSNRLEVSCETEVYEGALLYHYSMEQVQADQISLHEPPKLLETVRFPLMEAEVLQRLHDKLGPSPLRDTVASALMYHRNESLQPSLQGPHTELRSDFQCVVGFGGIHSTPSTILSDQAKYLNPLLGEWKHFTASLAPRMSNQGIAVLNNFVYLIGGDNNVQGFRAESRCWRYDPRHNRWFQIQSLQQEHADLCVCVVGKYIYAVAGRDYHNNLSAVERYDPATNSWEYVAPLKKEVYAHAGTTLQGKMYITCGRRGEDYLKETHCYDPGSNTWHTLADGPVRRAWHGMAALLDKLFVIGGSNNDAGYRRDVHQVACYSCTSRQWSSVCPLPAGHGEPGIAVLDNRIYVLGGRSHNRGSRTGYVHIYDMEKDCWEEGPQLNNSISGLAACVLTLPRSLLHEQPRGTPNRSQADADFASEVMSVSDWEEFDNSSED.

A2 bears the N-acetylalanine mark. One can recognise a BTB domain in the interval 50–117; it reads FDVVLVVEGR…IYTSELELSL (68 aa). 6 Kelch repeats span residues 299–349, 350–399, 400–446, 448–493, 494–544, and 545–593; these read CVVG…VLNN, FVYL…VVGK, YIYA…TLQG, MYIT…ALLD, KLFV…VLDN, and RIYV…VLTL. Position 463 is a phosphothreonine (T463). Position 466 is a phosphotyrosine (Y466). Position 475 is a phosphothreonine (T475). The tract at residues 600–634 is disordered; the sequence is EQPRGTPNRSQADADFASEVMSVSDWEEFDNSSED. T605 carries the post-translational modification Phosphothreonine. Over residues 624–634 the composition is skewed to acidic residues; that stretch reads DWEEFDNSSED.

In terms of assembly, component of the BCR(KLHL22) E3 ubiquitin ligase complex, at least composed of CUL3, KLHL22 and RBX1. Interacts with PLK1. Interacts with DEPDC5 (via DEP domain); the interaction depends on amino acid availability. Interacts with YWHAE; required for the nuclear localization of KLHL22 upon amino acid starvation.

It localises to the cytoplasm. Its subcellular location is the cytosol. The protein resides in the cytoskeleton. The protein localises to the microtubule organizing center. It is found in the centrosome. It localises to the spindle. Its subcellular location is the nucleus. The protein resides in the lysosome. Its pathway is protein modification; protein ubiquitination. Functionally, substrate-specific adapter of a BCR (BTB-CUL3-RBX1) E3 ubiquitin ligase complex required for chromosome alignment and localization of PLK1 at kinetochores. The BCR(KLHL22) ubiquitin ligase complex mediates monoubiquitination of PLK1, leading to PLK1 dissociation from phosphoreceptor proteins and subsequent removal from kinetochores, allowing silencing of the spindle assembly checkpoint (SAC) and chromosome segregation. Monoubiquitination of PLK1 does not lead to PLK1 degradation. The BCR(KLHL22) ubiquitin ligase complex is also responsible for the amino acid-stimulated 'Lys-48' polyubiquitination and proteasomal degradation of DEPDC5. Through the degradation of DEPDC5, releases the GATOR1 complex-mediated inhibition of the TORC1 pathway. It is therefore an amino acid-dependent activator within the amino acid-sensing branch of the TORC1 pathway, indirectly regulating different cellular processes including cell growth and autophagy. This chain is Kelch-like protein 22, found in Rattus norvegicus (Rat).